A 472-amino-acid chain; its full sequence is 3-isopropylmalate dehydratase large subunit (472 aa).

[4Fe-4S] cluster is bound by residues C352, C412, and C415.

This sequence belongs to the aconitase/IPM isomerase family. LeuC type 1 subfamily. In terms of assembly, heterodimer of LeuC and LeuD. [4Fe-4S] cluster serves as cofactor.

It catalyses the reaction (2R,3S)-3-isopropylmalate = (2S)-2-isopropylmalate. Its pathway is amino-acid biosynthesis; L-leucine biosynthesis; L-leucine from 3-methyl-2-oxobutanoate: step 2/4. Functionally, catalyzes the isomerization between 2-isopropylmalate and 3-isopropylmalate, via the formation of 2-isopropylmaleate. The sequence is that of 3-isopropylmalate dehydratase large subunit from Roseiflexus castenholzii (strain DSM 13941 / HLO8).